A 285-amino-acid chain; its full sequence is N-alpha-acetyltransferase 40 (285 aa).

An N-acetyltransferase domain is found at 88 to 274 (INYKLHKSRG…GGGRVVVPCD (187 aa)). Substrate-binding positions include Tyr-116, 163-165 (TEE), and Tyr-185. Acetyl-CoA is bound by residues 187-189 (VHV) and 195-200 (GHGIGR). Thr-228 lines the substrate pocket. An acetyl-CoA-binding site is contributed by Asn-233.

It belongs to the acetyltransferase family. NAA40 subfamily.

Its subcellular location is the nucleus. It localises to the cytoplasm. It carries out the reaction N-terminal L-seryl-[histone H4] + acetyl-CoA = N-terminal N(alpha)-acetyl-L-seryl-[histone H4] + CoA + H(+). It catalyses the reaction N-terminal L-seryl-[histone H2A] + acetyl-CoA = N-terminal N(alpha)-acetyl-L-seryl-[histone H2A] + CoA + H(+). N-alpha-acetyltransferase that specifically mediates the acetylation of the N-terminal residues of histones H4 and H2A. The protein is N-alpha-acetyltransferase 40 of Saccharomyces cerevisiae (strain ATCC 204508 / S288c) (Baker's yeast).